The following is a 245-amino-acid chain: Heat shock transcription factor (245 aa).

The DNA-binding element occupies 17–115 (KSGFVNRLYR…LISLITRDKS (99 aa)). An involved in trimerization region spans residues 130 to 169 (SLQYLASCNYKQQKEINDLKDRIKTLETKYATLYEIISNA).

The protein belongs to the HSF family. As to quaternary structure, homotrimer. Homotrimerization increases the affinity of HSF1 to DNA.

The protein localises to the nucleus. Functionally, DNA-binding transcription factor that specifically binds heat shock promoter elements (HSE) and activates transcription. In Enterocytozoon bieneusi (strain H348) (Microsporidian parasite), this protein is Heat shock transcription factor.